Here is a 350-residue protein sequence, read N- to C-terminus: Sperm equatorial segment protein 1 (350 aa).

An N-terminal signal peptide occupies residues 1–19 (MKPLVLLVALLLWPSSVPA). Residue N128 is glycosylated (N-linked (GlcNAc...) asparagine).

It belongs to the SPESP1 family. Glycosylated. In testis there are two predominant forms of 77- and 67-kDa and a form of 47-kDa, whereas in epididymal sperm from caput, corpus, and cauda there are two forms of 47- and 43-kDa. Testis forms contain complex carbohydrate residues. Epididymal sperm forms are N-glycosylated. Then undergoes significant glycosylation in the testis and that the majority of these glycoconjugates are removed by the time sperm reach the caput epididymis. Highly expressed in testis, where it is localized in the acrosome of postmeiotic stages of spermiogenesis (round and elongating spermatids and in ejaculated spermatozoa) (at protein level). Poorly expressed in placenta and fetal lung.

The protein resides in the cytoplasmic vesicle. It localises to the secretory vesicle. It is found in the acrosome. In terms of biological role, involved in fertilization ability of sperm. The protein is Sperm equatorial segment protein 1 of Homo sapiens (Human).